The primary structure comprises 374 residues: Type II methyltransferase M.NgoFVII (374 aa).

The region spanning 16-344 (PKILSLFSGC…KSILPIFSDN (329 aa)) is the SAM-dependent MTase C5-type domain. Residue C88 is part of the active site.

It belongs to the class I-like SAM-binding methyltransferase superfamily. C5-methyltransferase family.

The enzyme catalyses a 2'-deoxycytidine in DNA + S-adenosyl-L-methionine = a 5-methyl-2'-deoxycytidine in DNA + S-adenosyl-L-homocysteine + H(+). In terms of biological role, a methylase, recognizes the double-stranded sequence 5'-GCSGC-3', methylates C-5 on both strands, and protects the DNA from cleavage by the NgoFVII endonuclease. The polypeptide is Type II methyltransferase M.NgoFVII (ngoFVIIM) (Neisseria gonorrhoeae).